The following is a 721-amino-acid chain: Long-chain-fatty-acid--CoA ligase ACSBG1 (721 aa).

The tract at residues 1–64 (MPRSSEAGYC…SHGLELSAPE (64 aa)) is disordered. The segment covering 26–43 (QQGASMGTSPDNSQTSSL) has biased composition (polar residues). 4 positions are modified to phosphoserine: serine 34, serine 50, serine 53, and serine 70. Residues 279-287 (TSGTTGNPK), 469-474 (AGYGLS), aspartate 547, and arginine 562 each bind ATP. Residue tyrosine 655 is modified to Phosphotyrosine. Lysine 698 is a binding site for ATP.

Belongs to the ATP-dependent AMP-binding enzyme family. Bubblegum subfamily. In terms of tissue distribution, present in testis, at a lower level in brain, and at a very low level in ovary. Not detected in other tissues. tested. Present in Leydig cells of the adult testis and to a lesser degree in the seminiferous tubules in spermatogonia and Sertoli cells (at protein level).

The protein resides in the cytoplasm. Its subcellular location is the cytoplasmic vesicle. It is found in the microsome. The protein localises to the endoplasmic reticulum. It localises to the cell membrane. It carries out the reaction a long-chain fatty acid + ATP + CoA = a long-chain fatty acyl-CoA + AMP + diphosphate. It catalyses the reaction (E)-hexadec-2-enoate + ATP + CoA = (2E)-hexadecenoyl-CoA + AMP + diphosphate. The enzyme catalyses hexadecanoate + ATP + CoA = hexadecanoyl-CoA + AMP + diphosphate. Functionally, catalyzes the conversion of fatty acids such as long-chain and very long-chain fatty acids to their active form acyl-CoAs for both synthesis of cellular lipids, and degradation via beta-oxidation. Can activate diverse saturated, monosaturated and polyunsaturated fatty acids. The sequence is that of Long-chain-fatty-acid--CoA ligase ACSBG1 from Rattus norvegicus (Rat).